The chain runs to 459 residues: 3-carboxy-cis,cis-muconate cycloisomerase (459 aa).

The protein belongs to the class-II fumarase/aspartase family. In terms of assembly, homotetramer.

It localises to the cytoplasm. It catalyses the reaction 2-(carboxymethyl)-5-oxo-2,5-dihydro-2-furoate = 3-carboxy-cis,cis-muconate + H(+). Its pathway is aromatic compound metabolism; beta-ketoadipate pathway; 5-oxo-4,5-dihydro-2-furylacetate from 3-carboxy-cis,cis-muconate: step 1/2. Its function is as follows. Catalyzes an anti cycloisomerization. This Pseudomonas aeruginosa (strain ATCC 15692 / DSM 22644 / CIP 104116 / JCM 14847 / LMG 12228 / 1C / PRS 101 / PAO1) protein is 3-carboxy-cis,cis-muconate cycloisomerase (pcaB).